The sequence spans 720 residues: MIMFRSLSVTPVWKAGLSLSHRSIPINSRLSSVRNYISIGCANKTGSRLLRSAGVSSQYKDFRRFNSSSNGNGTDKNASVAPKTEVKKIVPPKPSTNGKSKTPTISELRIMKDLFKYIWPSGDNKVKIRVLIALALLIGAKLLNVQVPFFFKQTIDSMNIEWGPDVATVLPVAITMTILSYGAARFGAVMFGELRNAVFAKVAQNAIRKVSLQTFQHLMKLDLGWHLSRQTGGLTRAMDRGTKGISYVLSAMVFHMIPITFEISVVCGILTYQFGSSFAAMTFVTMLLYSFFTFKTTAWRTEFRRSANRADNKAASVALDSLINFEAVKYFNNEEYLANKYHQSLSKYRDSQIKVAQSLAFLNAGQNFIFTSALTAMMYMGASGVMEGALTVGDLVLINQLVFQLSVPLNFLGSVYRELKQSLIDMESLFKLQKNPILIKNTERPLMLPEHLPCEIKFENVTFGYQPDRNILKNATFTIAPGKKTAIVGPSGSGKSTILRLVFRFYDPQQGRILLDGKDIRELDLDELRRIVGVVPQDTPLFNDTIWENVKFGRINATDNEIVTAIEKAQLSDLIHKLPKGTETIVGERGLMISGGEKQRLAIARVLLKDTPIMFFDEATSALDTHTEQSLLKTIKENFSDVAKTSVYIAHRLRTIADADKIIVLENGAVREEGTHNALLANPNSLYSELWNIQENLDMLEDELEDELKLEKEPRTSKKD.

The transit peptide at 1 to 36 directs the protein to the mitochondrion; that stretch reads MIMFRSLSVTPVWKAGLSLSHRSIPINSRLSSVRNY. Residues 37-129 are Mitochondrial matrix-facing; that stretch reads ISIGCANKTG…PSGDNKVKIR (93 aa). The segment covering 64–77 has biased composition (polar residues); that stretch reads RFNSSSNGNGTDKN. The disordered stretch occupies residues 64–102; it reads RFNSSSNGNGTDKNASVAPKTEVKKIVPPKPSTNGKSKT. Residues 130–151 form a helical membrane-spanning segment; that stretch reads VLIALALLIGAKLLNVQVPFFF. Residues 130 to 421 enclose the ABC transmembrane type-1 domain; that stretch reads VLIALALLIG…LGSVYRELKQ (292 aa). The Mitochondrial intermembrane portion of the chain corresponds to 152–175; sequence KQTIDSMNIEWGPDVATVLPVAIT. Residues 176-199 traverse the membrane as a helical segment; it reads MTILSYGAARFGAVMFGELRNAVF. The Mitochondrial matrix portion of the chain corresponds to 200-248; it reads AKVAQNAIRKVSLQTFQHLMKLDLGWHLSRQTGGLTRAMDRGTKGISYV. The helical transmembrane segment at 249–272 threads the bilayer; it reads LSAMVFHMIPITFEISVVCGILTY. Position 273 (Q273) is a topological domain, mitochondrial intermembrane. A helical membrane pass occupies residues 274–294; the sequence is FGSSFAAMTFVTMLLYSFFTF. Residues 295 to 360 lie on the Mitochondrial matrix side of the membrane; that stretch reads KTTAWRTEFR…SQIKVAQSLA (66 aa). Glutathione is bound by residues 300–304 and 363–366; these read RTEFR and NAGQ. The helical transmembrane segment at 361–379 threads the bilayer; the sequence is FLNAGQNFIFTSALTAMMY. Topologically, residues 380–394 are mitochondrial intermembrane; the sequence is MGASGVMEGALTVGD. A helical membrane pass occupies residues 395–416; that stretch reads LVLINQLVFQLSVPLNFLGSVY. Glutathione is bound at residue G413. At 417 to 720 the chain is on the mitochondrial matrix side; the sequence is RELKQSLIDM…EKEPRTSKKD (304 aa). The ABC transporter domain maps to 456 to 692; it reads IKFENVTFGY…PNSLYSELWN (237 aa). Residues Y465 and 489 to 500 contribute to the ATP site; that span reads GPSGSGKSTILR.

It belongs to the ABC transporter superfamily. ABCB family. Heavy Metal importer (TC 3.A.1.210) subfamily. In terms of assembly, homodimer.

Its subcellular location is the mitochondrion inner membrane. Functionally, performs an essential function in the generation of cytoplasmic iron-sulfur proteins by mediating the ATP-dependent export of Fe/S cluster precursors synthesized by NFS1 and other mitochondrial proteins. Hydrolyzes ATP. Binds glutathione and may function by transporting a glutathione-conjugated iron-sulfur compound. This chain is Iron-sulfur clusters transporter ATM1, mitochondrial, found in Kluyveromyces lactis (strain ATCC 8585 / CBS 2359 / DSM 70799 / NBRC 1267 / NRRL Y-1140 / WM37) (Yeast).